We begin with the raw amino-acid sequence, 396 residues long: Phosphoglycerate kinase (396 aa).

Substrate contacts are provided by residues 21–23 (DFN), Arg37, 60–63 (HLGR), Arg121, and Arg154. ATP-binding positions include Lys205, Gly296, Glu327, and 353–356 (GGDS).

This sequence belongs to the phosphoglycerate kinase family. In terms of assembly, monomer.

It localises to the cytoplasm. It carries out the reaction (2R)-3-phosphoglycerate + ATP = (2R)-3-phospho-glyceroyl phosphate + ADP. It participates in carbohydrate degradation; glycolysis; pyruvate from D-glyceraldehyde 3-phosphate: step 2/5. This chain is Phosphoglycerate kinase, found in Anaeromyxobacter sp. (strain K).